The following is a 312-amino-acid chain: Phospho-N-acetylmuramoyl-pentapeptide-transferase (312 aa).

9 consecutive transmembrane segments (helical) span residues 1–21, 48–68, 76–96, 115–135, 140–160, 165–185, 214–234, 238–258, and 289–309; these read MMVV…HYSK, GVAF…FGGI, EVMI…DDFL, FPLQ…LASH, GFMS…FVMV, AFNF…IVLL, VFMG…AYAL, VWLL…VVIQ, and VTLR…WLMG.

Belongs to the glycosyltransferase 4 family. MraY subfamily. Requires Mg(2+) as cofactor.

The protein localises to the cell membrane. It carries out the reaction UDP-N-acetyl-alpha-D-muramoyl-L-alanyl-gamma-D-glutamyl-meso-2,6-diaminopimeloyl-D-alanyl-D-alanine + di-trans,octa-cis-undecaprenyl phosphate = di-trans,octa-cis-undecaprenyl diphospho-N-acetyl-alpha-D-muramoyl-L-alanyl-D-glutamyl-meso-2,6-diaminopimeloyl-D-alanyl-D-alanine + UMP. It participates in cell wall biogenesis; peptidoglycan biosynthesis. Functionally, catalyzes the initial step of the lipid cycle reactions in the biosynthesis of the cell wall peptidoglycan: transfers peptidoglycan precursor phospho-MurNAc-pentapeptide from UDP-MurNAc-pentapeptide onto the lipid carrier undecaprenyl phosphate, yielding undecaprenyl-pyrophosphoryl-MurNAc-pentapeptide, known as lipid I. This is Phospho-N-acetylmuramoyl-pentapeptide-transferase from Deinococcus radiodurans (strain ATCC 13939 / DSM 20539 / JCM 16871 / CCUG 27074 / LMG 4051 / NBRC 15346 / NCIMB 9279 / VKM B-1422 / R1).